A 214-amino-acid polypeptide reads, in one-letter code: Ribosomal RNA small subunit methyltransferase G (214 aa).

Residues G81, M86, 132 to 133 (VE), and R147 each bind S-adenosyl-L-methionine.

Belongs to the methyltransferase superfamily. RNA methyltransferase RsmG family.

It localises to the cytoplasm. The catalysed reaction is guanosine(527) in 16S rRNA + S-adenosyl-L-methionine = N(7)-methylguanosine(527) in 16S rRNA + S-adenosyl-L-homocysteine. Specifically methylates the N7 position of guanine in position 527 of 16S rRNA. In Pseudomonas aeruginosa (strain LESB58), this protein is Ribosomal RNA small subunit methyltransferase G.